Consider the following 255-residue polypeptide: Fe(3+) dicitrate transport ATP-binding protein FecE (255 aa).

An ABC transporter domain is found at 3–238 (LRTENLTVSY…GLLRTVFSVE (236 aa)). 35-42 (GPNGCGKS) serves as a coordination point for ATP.

The protein belongs to the ABC transporter superfamily. As to quaternary structure, the complex is composed of two ATP-binding proteins (FecE), two transmembrane proteins (FecC and FecD) and a solute-binding protein (FecB).

Its subcellular location is the cell inner membrane. The enzyme catalyses iron(III) dicitrate(out) + ATP + H2O = iron(III) dicitrate(in) + ADP + phosphate + H(+). Its function is as follows. Part of the ABC transporter complex FecBCDE involved in citrate-dependent Fe(3+) uptake. Binds ATP. Probably responsible for energy coupling to the transport system. The polypeptide is Fe(3+) dicitrate transport ATP-binding protein FecE (Escherichia coli (strain K12)).